The sequence spans 94 residues: Integration host factor subunit beta (94 aa).

It belongs to the bacterial histone-like protein family. As to quaternary structure, heterodimer of an alpha and a beta chain.

In terms of biological role, this protein is one of the two subunits of integration host factor, a specific DNA-binding protein that functions in genetic recombination as well as in transcriptional and translational control. In Ruegeria pomeroyi (strain ATCC 700808 / DSM 15171 / DSS-3) (Silicibacter pomeroyi), this protein is Integration host factor subunit beta.